The chain runs to 253 residues: Phosphoribosylaminoimidazole-succinocarboxamide synthase (253 aa).

Belongs to the SAICAR synthetase family.

The catalysed reaction is 5-amino-1-(5-phospho-D-ribosyl)imidazole-4-carboxylate + L-aspartate + ATP = (2S)-2-[5-amino-1-(5-phospho-beta-D-ribosyl)imidazole-4-carboxamido]succinate + ADP + phosphate + 2 H(+). Its pathway is purine metabolism; IMP biosynthesis via de novo pathway; 5-amino-1-(5-phospho-D-ribosyl)imidazole-4-carboxamide from 5-amino-1-(5-phospho-D-ribosyl)imidazole-4-carboxylate: step 1/2. This is Phosphoribosylaminoimidazole-succinocarboxamide synthase from Jannaschia sp. (strain CCS1).